A 291-amino-acid chain; its full sequence is 4-diphosphocytidyl-2-C-methyl-D-erythritol kinase (291 aa).

The active site involves K11. 94 to 104 (PAGSGLGGGSA) lines the ATP pocket. D136 is a catalytic residue.

This sequence belongs to the GHMP kinase family. IspE subfamily.

The catalysed reaction is 4-CDP-2-C-methyl-D-erythritol + ATP = 4-CDP-2-C-methyl-D-erythritol 2-phosphate + ADP + H(+). It functions in the pathway isoprenoid biosynthesis; isopentenyl diphosphate biosynthesis via DXP pathway; isopentenyl diphosphate from 1-deoxy-D-xylulose 5-phosphate: step 3/6. Its function is as follows. Catalyzes the phosphorylation of the position 2 hydroxy group of 4-diphosphocytidyl-2C-methyl-D-erythritol. In Treponema pallidum (strain Nichols), this protein is 4-diphosphocytidyl-2-C-methyl-D-erythritol kinase.